The chain runs to 245 residues: Ribosomal protein L11 methyltransferase (245 aa).

Threonine 101, glycine 122, aspartate 144, and asparagine 184 together coordinate S-adenosyl-L-methionine.

The protein belongs to the methyltransferase superfamily. PrmA family.

It localises to the cytoplasm. The enzyme catalyses L-lysyl-[protein] + 3 S-adenosyl-L-methionine = N(6),N(6),N(6)-trimethyl-L-lysyl-[protein] + 3 S-adenosyl-L-homocysteine + 3 H(+). Methylates ribosomal protein L11. The chain is Ribosomal protein L11 methyltransferase from Aquifex aeolicus (strain VF5).